Reading from the N-terminus, the 113-residue chain is Transcriptional regulator RamA (113 aa).

The region spanning 9 to 107 (DTIVEWIDDN…NLPPGAYRKE (99 aa)) is the HTH araC/xylS-type domain. 2 DNA-binding regions (H-T-H motif) span residues 26-47 (DDIARHAGYSKWHLQRLFMQYK) and 74-97 (VYDICLKYGFDSQQTFTRIFTRTF).

Transcriptional regulator. Binds to regulatory regions of target genes, including efflux pump operon acrAB and outer membrane protein gene tolC. Represses transcription of genes belonging to the flagellar regulon, including flhD, flhB and fliC; probably thereby leading to repression of motility. Represses expression of the flhDC operon in a post-transcriptional manner. Activates expression of acrAB, perhaps thereby conferring multidrug resistance. Involved in indole- and bile-mediated regulation of acrAB; binding of bile to RamA may contribute to activation of expression of acrAB. Plays a role in regulating virulence in mice. The sequence is that of Transcriptional regulator RamA from Salmonella typhimurium (strain LT2 / SGSC1412 / ATCC 700720).